The following is a 1070-amino-acid chain: Duffy receptor (1070 aa).

Residues 1–20 form the signal peptide; that stretch reads MKGKNRSLFVLLVLLLLHKV. At 21-1007 the chain is on the extracellular side; sequence NNVLLERTIE…CFTKGGFKDK (987 aa). A disordered region spans residues 116–146; that stretch reads YMEGKDGGDKTGEEKDGEHKTDSKTDNGKGA. Positions 118–142 are enriched in basic and acidic residues; it reads EGKDGGDKTGEEKDGEHKTDSKTDN. Asn183 carries N-linked (GlcNAc...) asparagine glycosylation. Residues 211-521 are pvRII region; mediates ACKR1 binding; sequence NTVMKNCNYK…AKKNTQEVVT (311 aa). 2 disulfide bridges follow: Cys217/Cys246 and Cys230/Cys237. Asn255, Asn351, and Asn420 each carry an N-linked (GlcNAc...) asparagine glycan. 4 disulfide bridges follow: Cys300–Cys377, Cys415–Cys432, Cys427–Cys507, and Cys436–Cys505. 3 stretches are compositionally biased toward polar residues: residues 525–542, 554–569, and 629–642; these read NAAK…QPVD, THGN…TTGK, and GASN…TVEA. The segment at 525-906 is disordered; the sequence is NAAKSQATNS…HLNSNNNLSN (382 aa). The span at 697–711 shows a compositional bias: basic and acidic residues; sequence ETGKGQDNDMAKATK. Positions 712-728 are enriched in low complexity; the sequence is DSSNSSDGTSSATGDTT. N-linked (GlcNAc...) asparagine glycosylation occurs at Asn715. Positions 730-748 are enriched in basic and acidic residues; that stretch reads AVDREINKGVPEDRDKTVG. A glycan (N-linked (GlcNAc...) asparagine) is linked at Asn787. Over residues 808 to 817 the composition is skewed to low complexity; sequence LSKTESLEST. N-linked (GlcNAc...) asparagine glycosylation occurs at Asn825. Basic and acidic residues-rich tracts occupy residues 835 to 849 and 865 to 889; these read NGGK…DFKS and AEGH…KDTF. The span at 895–906 shows a compositional bias: low complexity; that stretch reads SHHLNSNNNLSN. Residues Asn903 and Asn938 are each glycosylated (N-linked (GlcNAc...) asparagine). Residues 1008 to 1025 traverse the membrane as a helical segment; sequence TYFAAAGALLILLLLIAS. The Cytoplasmic segment spans residues 1026 to 1070; that stretch reads RKMIKNDSEEATFNEFEEYCDNIHRIPLMPNNIEHMQPSTPLDYS.

In terms of assembly, homodimer; dimerization (via PvRII region) is promoted by the interaction with human ACKR1. Interacts (via PvRII region) with human ACKR1 (via N-terminal extracellular domain).

The protein localises to the membrane. Its function is as follows. Binds to the human erythrocyte Duffy blood group determinant (ACKR1). This chain is Duffy receptor (PVDR), found in Plasmodium vivax (strain Salvador I).